A 515-amino-acid polypeptide reads, in one-letter code: RNA-splicing ligase RtcB homolog (515 aa).

The Mn(2+) site is built by Asp129, Cys132, His237, His269, and His363. 236–240 (NHYAE) provides a ligand contact to GMP. GMP contacts are provided by residues 363–364 (HN), 412–415 (GGTM), Ser419, 438–441 (HGAG), and Lys514. Residue His438 is the GMP-histidine intermediate of the active site.

It belongs to the RtcB family. In terms of assembly, catalytic component of the tRNA-splicing ligase complex. It depends on Mn(2+) as a cofactor.

It carries out the reaction a 3'-end 3'-phospho-ribonucleotide-RNA + a 5'-end dephospho-ribonucleoside-RNA + GTP = a ribonucleotidyl-ribonucleotide-RNA + GMP + diphosphate. The enzyme catalyses a 3'-end 2',3'-cyclophospho-ribonucleotide-RNA + a 5'-end dephospho-ribonucleoside-RNA + GTP + H2O = a ribonucleotidyl-ribonucleotide-RNA + GMP + diphosphate + H(+). Functionally, catalytic subunit of the tRNA-splicing ligase complex that acts by directly joining spliced tRNA halves to mature-sized tRNAs by incorporating the precursor-derived splice junction phosphate into the mature tRNA as a canonical 3',5'-phosphodiester. May act as an RNA ligase with broad substrate specificity, and may function toward other RNAs. This chain is RNA-splicing ligase RtcB homolog, found in Ostreococcus tauri.